The primary structure comprises 253 residues: Sulfate transporter CysZ (253 aa).

A run of 4 helical transmembrane segments spans residues 31–51, 75–95, 151–171, and 222–242; these read FVILPLLVNILLMGGAFWWLF, LLWPLAVISVLLVFGYFFSTI, IVLLILYFIPGIGQTVAPVLW, and IPLLNLFIMPVAVCGATAMWV.

The protein belongs to the CysZ family.

The protein localises to the cell inner membrane. Its function is as follows. High affinity, high specificity proton-dependent sulfate transporter, which mediates sulfate uptake. Provides the sulfur source for the cysteine synthesis pathway. This is Sulfate transporter CysZ from Escherichia coli O81 (strain ED1a).